The sequence spans 542 residues: 1-aminocyclopropane-1-carboxylate synthase 6 (542 aa).

Residues 1–28 form a disordered region; it reads MRRSGNGGAAKKKKKRSASAASERRPRA. K379 carries the post-translational modification N6-(pyridoxal phosphate)lysine.

The protein belongs to the class-I pyridoxal-phosphate-dependent aminotransferase family. Requires pyridoxal 5'-phosphate as cofactor. Expressed in leaves.

The protein resides in the plastid. The protein localises to the amyloplast membrane. The catalysed reaction is S-adenosyl-L-methionine = 1-aminocyclopropane-1-carboxylate + S-methyl-5'-thioadenosine + H(+). It participates in alkene biosynthesis; ethylene biosynthesis via S-adenosyl-L-methionine; ethylene from S-adenosyl-L-methionine: step 1/2. In terms of biological role, catalyzes the formation of 1-aminocyclopropane-1-carboxylate, a direct precursor of ethylene in higher plants. Required for the regulation of starch grain size in endosperm. The sequence is that of 1-aminocyclopropane-1-carboxylate synthase 6 from Oryza sativa subsp. japonica (Rice).